The sequence spans 355 residues: Adenine deaminase (355 aa).

Zn(2+)-binding residues include H23, H25, and H211. E214 functions as the Proton donor in the catalytic mechanism. D292 provides a ligand contact to Zn(2+). Substrate is bound at residue D293.

It belongs to the metallo-dependent hydrolases superfamily. Adenosine and AMP deaminases family. Adenine deaminase type 2 subfamily. The cofactor is Zn(2+).

The protein resides in the cytoplasm. It localises to the nucleus. It catalyses the reaction adenine + H2O + H(+) = hypoxanthine + NH4(+). Its function is as follows. Catalyzes the hydrolytic deamination of adenine to hypoxanthine. Plays an important role in the purine salvage pathway and in nitrogen catabolism. This is Adenine deaminase from Kluyveromyces lactis (strain ATCC 8585 / CBS 2359 / DSM 70799 / NBRC 1267 / NRRL Y-1140 / WM37) (Yeast).